The chain runs to 30 residues: Cyclotide hyen-G (30 aa).

A cross-link (cyclopeptide (Gly-Asp)) is located at residues 1–30 (GLPCGESCVYIPCISTVLGCSCSNKVCYRD). Intrachain disulfides connect Cys4-Cys20, Cys8-Cys22, and Cys13-Cys27.

Post-translationally, this is a cyclic peptide. Detected in stems (at protein level).

Functionally, probably participates in a plant defense mechanism. This Pigea enneasperma (Spade flower) protein is Cyclotide hyen-G.